Reading from the N-terminus, the 207-residue chain is uncharacterized protein (207 aa).

Residues 1–19 (MRHGLLALICWLCCVVAHS) form the signal peptide.

This sequence to P.aeruginosa PA4490 and T.maritima TM0986.

This is an uncharacterized protein from Escherichia coli (strain K12).